A 757-amino-acid chain; its full sequence is Polyribonucleotide nucleotidyltransferase (757 aa).

2 residues coordinate Mg(2+): D525 and D531. The KH domain maps to 591-650 (PRVISVNIPVDKIGELIGPKGKTINAIQDETGADISIEEDGAVYIGAVDGPSAEAARAQV). The region spanning 662–734 (GESFLGTVVK…DRGKLSLAPV (73 aa)) is the S1 motif domain. The segment at 736–757 (EEAADQEGSAAASDGPEAPAEG) is disordered.

Belongs to the polyribonucleotide nucleotidyltransferase family. Mg(2+) serves as cofactor.

The protein resides in the cytoplasm. It carries out the reaction RNA(n+1) + phosphate = RNA(n) + a ribonucleoside 5'-diphosphate. Its function is as follows. Involved in mRNA degradation. Catalyzes the phosphorolysis of single-stranded polyribonucleotides processively in the 3'- to 5'-direction. The polypeptide is Polyribonucleotide nucleotidyltransferase (Clavibacter sepedonicus (Clavibacter michiganensis subsp. sepedonicus)).